Consider the following 330-residue polypeptide: ADP-L-glycero-D-manno-heptose-6-epimerase (330 aa).

Residues 11 to 12, 32 to 33, Lys39, Lys54, 75 to 79, and Asn92 each bind NADP(+); these read FI, DN, and EGACS. Tyr139 functions as the Proton acceptor in the catalytic mechanism. NADP(+) is bound at residue Lys143. Substrate is bound at residue Asn168. 2 residues coordinate NADP(+): Val169 and Lys177. The Proton acceptor role is filled by Lys177. Residues Arg179, His186, 200–203, Arg213, and Tyr292 each bind substrate; that span reads FGEY.

The protein belongs to the NAD(P)-dependent epimerase/dehydratase family. HldD subfamily. As to quaternary structure, homopentamer. The cofactor is NADP(+).

The catalysed reaction is ADP-D-glycero-beta-D-manno-heptose = ADP-L-glycero-beta-D-manno-heptose. The protein operates within nucleotide-sugar biosynthesis; ADP-L-glycero-beta-D-manno-heptose biosynthesis; ADP-L-glycero-beta-D-manno-heptose from D-glycero-beta-D-manno-heptose 7-phosphate: step 4/4. Catalyzes the interconversion between ADP-D-glycero-beta-D-manno-heptose and ADP-L-glycero-beta-D-manno-heptose via an epimerization at carbon 6 of the heptose. This chain is ADP-L-glycero-D-manno-heptose-6-epimerase, found in Paraburkholderia phymatum (strain DSM 17167 / CIP 108236 / LMG 21445 / STM815) (Burkholderia phymatum).